A 209-amino-acid chain; its full sequence is MDLERGDKKPPPPPPPAPRTAAATTTTTTTPACSGKKRPPLRDSLVALQPVLLRAAAALAAAAAAAVMALDAQSYTAVVAIVGTRPLTQTFTAKFSDTPAFVYFVIANAIAAAYNLLVLLVRRRRRTTAGLVVRMLDMVVMALLATGAAAAASMAELGRNGNARARWNPVCDRFGSFCRRGGAALAASFVGVALMLALNLLSAASGAGC.

Basic and acidic residues predominate over residues 1–10 (MDLERGDKKP). Positions 1–39 (MDLERGDKKPPPPPPPAPRTAAATTTTTTTPACSGKKRP) are disordered. At 1–49 (MDLERGDKKPPPPPPPAPRTAAATTTTTTTPACSGKKRPPLRDSLVALQ) the chain is on the cytoplasmic side. Residues 19-32 (RTAAATTTTTTTPA) show a composition bias toward low complexity. A helical transmembrane segment spans residues 50–70 (PVLLRAAAALAAAAAAAVMAL). The Extracellular portion of the chain corresponds to 71 to 100 (DAQSYTAVVAIVGTRPLTQTFTAKFSDTPA). A helical membrane pass occupies residues 101-121 (FVYFVIANAIAAAYNLLVLLV). Over 122–134 (RRRRRTTAGLVVR) the chain is Cytoplasmic. A helical membrane pass occupies residues 135–155 (MLDMVVMALLATGAAAAASMA). Topologically, residues 156-180 (ELGRNGNARARWNPVCDRFGSFCRR) are extracellular. A helical membrane pass occupies residues 181–201 (GGAALAASFVGVALMLALNLL). Topologically, residues 202 to 209 (SAASGAGC) are cytoplasmic.

The protein belongs to the Casparian strip membrane proteins (CASP) family. As to quaternary structure, homodimer and heterodimers.

Its subcellular location is the cell membrane. In Zea mays (Maize), this protein is CASP-like protein 1B1.